Here is a 358-residue protein sequence, read N- to C-terminus: 3-dehydroquinate synthase (358 aa).

NAD(+)-binding positions include 102–106, 126–127, Lys-139, and Lys-148; these read GVVGD and TT. Zn(2+) contacts are provided by Glu-181, His-244, and His-260.

The protein belongs to the sugar phosphate cyclases superfamily. Dehydroquinate synthase family. Co(2+) serves as cofactor. It depends on Zn(2+) as a cofactor. NAD(+) is required as a cofactor.

The protein localises to the cytoplasm. It carries out the reaction 7-phospho-2-dehydro-3-deoxy-D-arabino-heptonate = 3-dehydroquinate + phosphate. It functions in the pathway metabolic intermediate biosynthesis; chorismate biosynthesis; chorismate from D-erythrose 4-phosphate and phosphoenolpyruvate: step 2/7. Its function is as follows. Catalyzes the conversion of 3-deoxy-D-arabino-heptulosonate 7-phosphate (DAHP) to dehydroquinate (DHQ). This chain is 3-dehydroquinate synthase, found in Symbiobacterium thermophilum (strain DSM 24528 / JCM 14929 / IAM 14863 / T).